A 67-amino-acid chain; its full sequence is Conotoxin Cl6.6a (67 aa).

An N-terminal signal peptide occupies residues 1 to 24 (MKLTCVLIAAVLLLAVCQLDSADA). The propeptide occupies 25–37 (TGYMRKNPSLRSP). 3 cysteine pairs are disulfide-bonded: Cys-43-Cys-57, Cys-50-Cys-61, and Cys-56-Cys-65.

This sequence belongs to the conotoxin O1 superfamily. As to expression, expressed by the venom duct.

The protein resides in the secreted. The polypeptide is Conotoxin Cl6.6a (Californiconus californicus (California cone)).